The chain runs to 131 residues: MATHKLSFFEKLANTFGALYRHQAQQFPRRLAILKAVGKHELAPPRSADIPAIKADWAKLQKFIETKQYVNLSIKESLVYSAVALEVVFWFFVGEMIGRRYIFGYIVPANYVSKDTKAKVAEKKRLAALEA.

Belongs to the ATPase g subunit family. In terms of assembly, subunit of the F-type ATPase which has 2 components, CF(1) - the catalytic core - and CF(0) - the membrane proton channel.

The protein localises to the mitochondrion membrane. In terms of biological role, mitochondrial membrane ATP synthase (F(1)F(0) ATP synthase or Complex V) produces ATP from ADP in the presence of a proton gradient across the membrane which is generated by electron transport complexes of the respiratory chain. F-type ATPases consist of two structural domains, F(1) - containing the extramembraneous catalytic core, and F(0) - containing the membrane proton channel, linked together by a central stalk and a peripheral stalk. During catalysis, ATP synthesis in the catalytic domain of F(1) is coupled via a rotary mechanism of the central stalk subunits to proton translocation. Part of the complex F(0) domain. Minor subunit located with subunit a in the membrane. The chain is Probable ATP synthase subunit g 1, mitochondrial from Caenorhabditis elegans.